The chain runs to 415 residues: Beta-1,4-glucuronyltransferase 1 (415 aa).

Topologically, residues 1–8 (MQMSYAIR) are cytoplasmic. A helical; Signal-anchor for type II membrane protein membrane pass occupies residues 9–36 (CAFYQLLLAALMLVAMLQLLYLSLLSGL). Over 37–415 (HGQEEQDQYF…AKYPNSPRRC (379 aa)) the chain is Lumenal. N204 is a glycosylation site (N-linked (GlcNAc...) asparagine). Positions 227 and 229 each coordinate Mn(2+). N300 carries an N-linked (GlcNAc...) asparagine glycan.

It belongs to the glycosyltransferase 49 family. As to quaternary structure, interacts with LARGE1 and LARGE2. It depends on Mn(2+) as a cofactor.

It is found in the golgi apparatus membrane. The enzyme catalyses 3-O-[beta-D-Xyl-(1-&gt;4)-Rib-ol-P-Rib-ol-P-3-beta-D-GalNAc-(1-&gt;3)-beta-D-GlcNAc-(1-&gt;4)-(O-6-P-alpha-D-Man)]-Thr-[protein] + UDP-alpha-D-glucuronate = 3-O-[beta-D-GlcA-(1-&gt;3)-beta-D-Xyl-(1-&gt;4)-Rib-ol-P-Rib-ol-P-3-beta-D-GalNAc-(1-&gt;3)-beta-D-GlcNAc-(1-&gt;4)-(O-6-P-alpha-D-Man)]-Thr-[protein] + UDP + H(+). It participates in protein modification; protein glycosylation. Its function is as follows. Beta-1,4-glucuronyltransferase involved in O-mannosylation of alpha-dystroglycan (DAG1). Transfers a glucuronic acid (GlcA) residue onto a xylose (Xyl) acceptor to produce the glucuronyl-beta-1,4-xylose-beta disaccharide primer, which is further elongated by LARGE1, during synthesis of phosphorylated O-mannosyl glycan. Phosphorylated O-mannosyl glycan is a carbohydrate structure present in alpha-dystroglycan (DAG1), which is required for binding laminin G-like domain-containing extracellular proteins with high affinity. Required for axon guidance; via its function in O-mannosylation of alpha-dystroglycan (DAG1). This chain is Beta-1,4-glucuronyltransferase 1, found in Pongo abelii (Sumatran orangutan).